Consider the following 429-residue polypeptide: C4-dicarboxylate transport protein (429 aa).

A run of 8 helical transmembrane segments spans residues 9–29 (VLYV…HYYP), 45–65 (LIKM…IAGM), 79–99 (LLYF…ATHI), 149–169 (GEIL…AHLG), 185–205 (VLFG…FGAM), 223–243 (LIGT…GAIA), 308–328 (IYMT…LTWM), and 356–376 (AATL…ILGI).

This sequence belongs to the dicarboxylate/amino acid:cation symporter (DAACS) (TC 2.A.23) family.

The protein resides in the cell inner membrane. In terms of biological role, responsible for the transport of dicarboxylates such as succinate, fumarate, and malate from the periplasm across the membrane. The sequence is that of C4-dicarboxylate transport protein from Burkholderia multivorans (strain ATCC 17616 / 249).